The following is a 327-amino-acid chain: Secondary metabolism regulator LAE1 (327 aa).

It belongs to the methyltransferase superfamily. LaeA methyltransferase family.

The protein resides in the nucleus. The catalysed reaction is L-methionyl-[protein] + S-adenosyl-L-methionine = S-methyl-L-methionyl-[protein] + S-adenosyl-L-homocysteine. Its function is as follows. Secondary metabolism regulator that controls the expression of the tenuazonic acid biosynthesis cluster. Methyltransferase that performs automethylation. No other methyl-accepting substrate has been identified yet. In Pyricularia oryzae (strain 70-15 / ATCC MYA-4617 / FGSC 8958) (Rice blast fungus), this protein is Secondary metabolism regulator LAE1.